Here is a 613-residue protein sequence, read N- to C-terminus: DNA mismatch repair protein MutL (613 aa).

It belongs to the DNA mismatch repair MutL/HexB family.

Its function is as follows. This protein is involved in the repair of mismatches in DNA. It is required for dam-dependent methyl-directed DNA mismatch repair. May act as a 'molecular matchmaker', a protein that promotes the formation of a stable complex between two or more DNA-binding proteins in an ATP-dependent manner without itself being part of a final effector complex. The protein is DNA mismatch repair protein MutL of Bradyrhizobium sp. (strain ORS 278).